Reading from the N-terminus, the 483-residue chain is Aspartyl/glutamyl-tRNA(Asn/Gln) amidotransferase subunit B (483 aa).

It belongs to the GatB/GatE family. GatB subfamily. In terms of assembly, heterotrimer of A, B and C subunits.

The enzyme catalyses L-glutamyl-tRNA(Gln) + L-glutamine + ATP + H2O = L-glutaminyl-tRNA(Gln) + L-glutamate + ADP + phosphate + H(+). The catalysed reaction is L-aspartyl-tRNA(Asn) + L-glutamine + ATP + H2O = L-asparaginyl-tRNA(Asn) + L-glutamate + ADP + phosphate + 2 H(+). Allows the formation of correctly charged Asn-tRNA(Asn) or Gln-tRNA(Gln) through the transamidation of misacylated Asp-tRNA(Asn) or Glu-tRNA(Gln) in organisms which lack either or both of asparaginyl-tRNA or glutaminyl-tRNA synthetases. The reaction takes place in the presence of glutamine and ATP through an activated phospho-Asp-tRNA(Asn) or phospho-Glu-tRNA(Gln). The chain is Aspartyl/glutamyl-tRNA(Asn/Gln) amidotransferase subunit B from Herpetosiphon aurantiacus (strain ATCC 23779 / DSM 785 / 114-95).